The following is a 160-amino-acid chain: Lymphocyte antigen 96 (160 aa).

A signal peptide spans 1-18 (MLPFLFFSTLFSSIFTEA). 3 disulfide bridges follow: Cys25/Cys51, Cys37/Cys148, and Cys95/Cys105. Asn26 is a glycosylation site (N-linked (GlcNAc...) asparagine). N-linked (GlcNAc...) asparagine glycosylation is present at Asn114. The interaction with lipopolysaccharide stretch occupies residues 119 to 123 (FSFKG).

In terms of assembly, heterogeneous homomer formed from homodimers; disulfide-linked. Belongs to the lipopolysaccharide (LPS) receptor, a multi-protein complex containing at least CD14, LY96 and TLR4. Binds to the extracellular domains of TLR2 and TLR4. Ligand binding induces interaction with TLR4 and oligomerization of the complex. In terms of processing, N-glycosylated; high-mannose.

The protein localises to the secreted. It is found in the extracellular space. Its function is as follows. Binds bacterial lipopolysaccharide (LPS). Cooperates with TLR4 in the innate immune response to bacterial lipopolysaccharide (LPS), and with TLR2 in the response to cell wall components from Gram-positive and Gram-negative bacteria. Enhances TLR4-dependent activation of NF-kappa-B. Cells expressing both LY96 and TLR4, but not TLR4 alone, respond to LPS. The protein is Lymphocyte antigen 96 (LY96) of Homo sapiens (Human).